Here is a 523-residue protein sequence, read N- to C-terminus: Translation initiation factor eIF2B subunit delta (523 aa).

The interval Met-1–Leu-154 is disordered. N-acetylalanine is present on Ala-2. Ser-12 is subject to Phosphoserine. Basic and acidic residues predominate over residues Met-31 to Arg-40. The span at Lys-41–Lys-51 shows a compositional bias: basic residues. The residue at position 85 (Thr-85) is a Phosphothreonine. Over residues Thr-95–Glu-120 the composition is skewed to basic and acidic residues. Ser-129 is modified (phosphoserine). Residues Arg-170–Leu-179 are may bind the chemical integrated stress response (ISR) inhibitor ISRIB.

The protein belongs to the eIF-2B alpha/beta/delta subunits family. As to quaternary structure, component of the translation initiation factor 2B (eIF2B) complex which is a heterodecamer of two sets of five different subunits: alpha, beta, gamma, delta and epsilon. Subunits alpha, beta and delta comprise a regulatory subcomplex and subunits epsilon and gamma comprise a catalytic subcomplex. Within the complex, the hexameric regulatory complex resides at the center, with the two heterodimeric catalytic subcomplexes bound on opposite sides.

The protein resides in the cytoplasm. It is found in the cytosol. Activated by the chemical integrated stress response (ISR) inhibitor ISRIB which stimulates guanine nucleotide exchange factor activity for both phosphorylated and unphosphorylated eIF2. In terms of biological role, acts as a component of the translation initiation factor 2B (eIF2B) complex, which catalyzes the exchange of GDP for GTP on eukaryotic initiation factor 2 (eIF2) gamma subunit. Its guanine nucleotide exchange factor activity is repressed when bound to eIF2 complex phosphorylated on the alpha subunit, thereby limiting the amount of methionyl-initiator methionine tRNA available to the ribosome and consequently global translation is repressed. The chain is Translation initiation factor eIF2B subunit delta (EIF2B4) from Oryctolagus cuniculus (Rabbit).